The primary structure comprises 162 residues: Interleukin-15 (162 aa).

The N-terminal stretch at Met-1–Ala-29 is a signal peptide. The propeptide occupies Gly-30–Ala-48. 2 disulfide bridges follow: Cys-83–Cys-133 and Cys-90–Cys-136. Asn-108 carries an N-linked (GlcNAc...) asparagine glycan.

Belongs to the IL-15/IL-21 family.

Its subcellular location is the secreted. In terms of biological role, cytokine that plays a major role in the development of inflammatory and protective immune responses to microbial invaders and parasites by modulating immune cells of both the innate and adaptive immune systems. Stimulates the proliferation of natural killer cells, T-cells and B-cells and promotes the secretion of several cytokines. In monocytes, induces the production of IL8 and monocyte chemotactic protein 1/CCL2, two chemokines that attract neutrophils and monocytes respectively to sites of infection. Unlike most cytokines, which are secreted in soluble form, IL15 is expressed in association with its high affinity IL15RA on the surface of IL15-producing cells and delivers signals to target cells that express IL2RB and IL2RG receptor subunits. Binding to its receptor triggers the phosphorylation of JAK1 and JAK3 and the recruitment and subsequent phosphorylation of signal transducer and activator of transcription-3/STAT3 and STAT5. In mast cells, induces the rapid tyrosine phosphorylation of STAT6 and thereby controls mast cell survival and release of cytokines such as IL4. This Ailuropoda melanoleuca (Giant panda) protein is Interleukin-15 (IL15).